A 344-amino-acid chain; its full sequence is N,N-dimethyltransferase OxyT (344 aa).

S-adenosyl-L-methionine is bound by residues aspartate 205 and 231 to 233; that span reads GDF.

Belongs to the class I-like SAM-binding methyltransferase superfamily. Cation-independent O-methyltransferase family.

It catalyses the reaction 4-amino-4-dedimethylamino-anhydrotetracycline + S-adenosyl-L-methionine = 4-methylamino-4-dedimethylamino-anhydrotetracycline + S-adenosyl-L-homocysteine + H(+). The enzyme catalyses 4-methylamino-4-dedimethylamino-anhydrotetracycline + S-adenosyl-L-methionine = anhydrotetracycline + S-adenosyl-L-homocysteine + H(+). The protein operates within antibiotic biosynthesis; oxytetracycline biosynthesis. In terms of biological role, involved in the biosynthesis of the tetracycline antibiotic, oxytetracycline. Catalyzes the dimethylation of 4-amino-4-de(dimethylamino)anhydrotetracycline (4-amino-ATC) to yield anhydrotetracycline (ATC). Also able to catalyze the dimethylation of 7-chloro-, 6-demethyl-, 2-decarboxamido-2-nitrile-, and 4-methylamino-derivatives of 4-amino-4-de(dimethylamino)anhydrotetracycline. In Streptomyces rimosus, this protein is N,N-dimethyltransferase OxyT.